The chain runs to 846 residues: Matrin-3 (846 aa).

Position 2 is an N-acetylserine (S2). K3 bears the N6-acetyllysine; alternate mark. Residue K3 forms a Glycyl lysine isopeptide (Lys-Gly) (interchain with G-Cter in SUMO2); alternate linkage. S4, S9, S14, S22, S41, S118, and S126 each carry phosphoserine. Residues K132 and K146 each participate in a glycyl lysine isopeptide (Lys-Gly) (interchain with G-Cter in SUMO2) cross-link. 2 disordered regions span residues 147-174 (RRRT…YRVP) and 187-213 (DSFD…ESGY). T150 is subject to Phosphothreonine. The residue at position 157 (S157) is a Phosphoserine. Y158 is modified (phosphotyrosine). Residues 160–174 (RDGRSATREPPYRVP) are compositionally biased toward basic and acidic residues. Phosphoserine is present on residues S164, S188, and S195. Residues 201–213 (DYDHGSRSQESGY) show a composition bias toward basic and acidic residues. The residue at position 202 (Y202) is a Phosphotyrosine. Phosphoserine is present on residues S206, S208, and S211. Position 219 is a phosphotyrosine (Y219). A Phosphoserine modification is found at S234. K245 is covalently cross-linked (Glycyl lysine isopeptide (Lys-Gly) (interchain with G-Cter in SUMO2)). Position 264 is a phosphoserine (S264). A Glycyl lysine isopeptide (Lys-Gly) (interchain with G-Cter in SUMO2) cross-link involves residue K269. Position 275 is a phosphoserine (S275). A disordered region spans residues 342 to 394 (PFMLQQSTNPAPGILGPPPPSFHLGGPAVGPRGNLGAGNGNLQGPRHMQKGRV). Residues 398-473 (RVVHIMDFQR…KPVRVHLSQK (76 aa)) form the RRM 1 domain. Residues K478, K487, and K491 each participate in a glycyl lysine isopeptide (Lys-Gly) (interchain with G-Cter in SUMO2) cross-link. Positions 496-571 (RVIHLSNLPH…RCVKVDLSEK (76 aa)) constitute an RRM 2 domain. 2 positions are modified to phosphoserine: S509 and S511. K515 participates in a covalent cross-link: Glycyl lysine isopeptide (Lys-Gly) (interchain with G-Cter in SUMO2). Position 522 is an N6-acetyllysine; alternate (K522). K522 is covalently cross-linked (Glycyl lysine isopeptide (Lys-Gly) (interchain with G-Cter in SUMO2); alternate). Phosphoserine is present on S533. Residues K554 and K555 each participate in a glycyl lysine isopeptide (Lys-Gly) (interchain with G-Cter in SUMO2) cross-link. An N6-acetyllysine modification is found at K571. A disordered region spans residues 588–779 (KKDKSRKRSY…EDYTIPDEYR (192 aa)). S596, S598, S604, and S606 each carry phosphoserine. The span at 600–642 (DGKESPSDKKSKTDAQKTESPAEGKEQEEKSGEDGEKDTKDDQ) shows a compositional bias: basic and acidic residues. Glycyl lysine isopeptide (Lys-Gly) (interchain with G-Cter in SUMO2) cross-links involve residues K616 and K629. The segment covering 652-664 (ESEDELLVDEEEA) has biased composition (acidic residues). Phosphoserine occurs at positions 653, 670, 672, and 673. Residues 665-675 (AALLESGSSVG) show a composition bias toward low complexity. At T678 the chain carries Phosphothreonine. S688 is subject to Phosphoserine. Residues 688–703 (SDGKKEPSDKAVKKDP) are compositionally biased toward basic and acidic residues. The Nuclear localization signal signature appears at 709 to 717 (SKKKLKKVD). Residues K718 and K735 each participate in a glycyl lysine isopeptide (Lys-Gly) (interchain with G-Cter in SUMO2) cross-link. Position 740 is a phosphothreonine (T740). S746 and S758 each carry phosphoserine. Positions 766-779 (DENKEDYTIPDEYR) are enriched in basic and acidic residues. K769 is covalently cross-linked (Glycyl lysine isopeptide (Lys-Gly) (interchain with G-Cter in SUMO2)). Residues 800–831 (FYCKLCSLFYTNEEVAKNTHCSSLPHYQKLKK) form a Matrin-type zinc finger. K835 is subject to N6-acetyllysine; alternate. K835 is covalently cross-linked (Glycyl lysine isopeptide (Lys-Gly) (interchain with G-Cter in SUMO2); alternate).

Part of a complex consisting of SFPQ, NONO and MATR3. Interacts with AGO1 and AGO2. Part of a complex composed at least of ASH2L, EMSY, HCFC1, HSPA8, CCAR2, MATR3, MKI67, RBBP5, TUBB2A, WDR5 and ZNF335; this complex may have a histone H3-specific methyltransferase activity. Interacts with TARDBP. Part of the HDP-RNP complex composed of at least HEXIM1, PRKDC, XRCC5, XRCC6, paraspeckle proteins (SFPQ, NONO, PSPC1, RBM14, and MATR3) and NEAT1 RNA. Interacts with FUS. Interacts with IGF2BP1. Interacts with IGF2BP2 and IGF2BP3. Interacts with RBPMS.

It is found in the nucleus matrix. In terms of biological role, may play a role in transcription or may interact with other nuclear matrix proteins to form the internal fibrogranular network. In association with the SFPQ-NONO heteromer may play a role in nuclear retention of defective RNAs. Plays a role in the regulation of DNA virus-mediated innate immune response by assembling into the HDP-RNP complex, a complex that serves as a platform for IRF3 phosphorylation and subsequent innate immune response activation through the cGAS-STING pathway. Binds to N6-methyladenosine (m6A)-containing mRNAs and contributes to MYC stability by binding to m6A-containing MYC mRNAs. May bind to specific miRNA hairpins. The polypeptide is Matrin-3 (Matr3) (Mus musculus (Mouse)).